The primary structure comprises 86 residues: Large ribosomal subunit protein uL10 (86 aa).

Belongs to the universal ribosomal protein uL10 family. Part of the ribosomal stalk of the 50S ribosomal subunit. The N-terminus interacts with L11 and the large rRNA to form the base of the stalk. The C-terminus forms an elongated spine to which L12 dimers bind in a sequential fashion forming a multimeric L10(L12)X complex.

In terms of biological role, forms part of the ribosomal stalk, playing a central role in the interaction of the ribosome with GTP-bound translation factors. The chain is Large ribosomal subunit protein uL10 (rplJ) from Serratia marcescens.